Here is a 188-residue protein sequence, read N- to C-terminus: Elongation factor P (188 aa).

K34 carries the post-translational modification N6-(3,6-diaminohexanoyl)-5-hydroxylysine.

It belongs to the elongation factor P family. In terms of processing, may be beta-lysylated on the epsilon-amino group of Lys-34 by the combined action of EpmA and EpmB, and then hydroxylated on the C5 position of the same residue by EpmC (if this protein is present). Lysylation is critical for the stimulatory effect of EF-P on peptide-bond formation. The lysylation moiety may extend toward the peptidyltransferase center and stabilize the terminal 3-CCA end of the tRNA. Hydroxylation of the C5 position on Lys-34 may allow additional potential stabilizing hydrogen-bond interactions with the P-tRNA.

It localises to the cytoplasm. It participates in protein biosynthesis; polypeptide chain elongation. Functionally, involved in peptide bond synthesis. Alleviates ribosome stalling that occurs when 3 or more consecutive Pro residues or the sequence PPG is present in a protein, possibly by augmenting the peptidyl transferase activity of the ribosome. Modification of Lys-34 is required for alleviation. The sequence is that of Elongation factor P from Erwinia tasmaniensis (strain DSM 17950 / CFBP 7177 / CIP 109463 / NCPPB 4357 / Et1/99).